Here is a 541-residue protein sequence, read N- to C-terminus: Threonine--tRNA ligase catalytic subunit (541 aa).

Residues 135–429 (DHRIIGERMD…LLEHFRGKLP (295 aa)) are catalytic. The Zn(2+) site is built by Cys-227, His-278, and His-406.

It belongs to the class-II aminoacyl-tRNA synthetase family. As to quaternary structure, homodimer. Probably interacts with its editing subunit. The cofactor is Zn(2+).

The protein resides in the cytoplasm. The enzyme catalyses tRNA(Thr) + L-threonine + ATP = L-threonyl-tRNA(Thr) + AMP + diphosphate + H(+). Functionally, catalyzes the attachment of threonine to tRNA(Thr) in a two-step reaction: L-threonine is first activated by ATP to form Thr-AMP and then transferred to the acceptor end of tRNA(Thr). Also activates L-serine and transfers it to tRNA(Thr) but cannot deacylate incorrectly charged amino acid; unlike most archaea the editing function is found in a freestanding protein. This is Threonine--tRNA ligase catalytic subunit from Metallosphaera sedula (strain ATCC 51363 / DSM 5348 / JCM 9185 / NBRC 15509 / TH2).